We begin with the raw amino-acid sequence, 199 residues long: GTP-binding protein Di-Ras2 (199 aa).

GTP-binding positions include 14-21 (GAGGVGKS), 33-39 (RESYIPT), 61-65 (DTTGS), and 121-124 (NKCD). Phosphoserine is present on S35. The short motif at 36–44 (YIPTVEDTY) is the Effector region element. Position 126 is a phosphoserine (S126). 152–153 (AK) contacts GTP. C196 is subject to Cysteine methyl ester. Residue C196 is the site of S-geranylgeranyl cysteine attachment. A propeptide spans 197–199 (VIM) (removed in mature form).

The protein belongs to the small GTPase superfamily. Di-Ras family. Ubiquitinated by the ECS(ASB11) complex via 'Lys-11'-linked ubiquitin chains, leading to its degradation by the proteasome.

The protein localises to the cell membrane. It carries out the reaction GTP + H2O = GDP + phosphate + H(+). Its function is as follows. Displays low GTPase activity and exists predominantly in the GTP-bound form. This Macaca fascicularis (Crab-eating macaque) protein is GTP-binding protein Di-Ras2 (DIRAS2).